A 108-amino-acid chain; its full sequence is Ribonuclease P protein component 4 (108 aa).

Zn(2+)-binding residues include C60, C63, C86, and C89.

This sequence belongs to the eukaryotic/archaeal RNase P protein component 4 family. As to quaternary structure, consists of a catalytic RNA component and at least 4-5 protein subunits. Zn(2+) serves as cofactor.

The protein resides in the cytoplasm. The catalysed reaction is Endonucleolytic cleavage of RNA, removing 5'-extranucleotides from tRNA precursor.. Part of ribonuclease P, a protein complex that generates mature tRNA molecules by cleaving their 5'-ends. The polypeptide is Ribonuclease P protein component 4 (Sulfurisphaera tokodaii (strain DSM 16993 / JCM 10545 / NBRC 100140 / 7) (Sulfolobus tokodaii)).